A 156-amino-acid polypeptide reads, in one-letter code: Small ribosomal subunit protein uS7 (156 aa).

It belongs to the universal ribosomal protein uS7 family. As to quaternary structure, part of the 30S ribosomal subunit. Contacts proteins S9 and S11.

Its function is as follows. One of the primary rRNA binding proteins, it binds directly to 16S rRNA where it nucleates assembly of the head domain of the 30S subunit. Is located at the subunit interface close to the decoding center, probably blocks exit of the E-site tRNA. The chain is Small ribosomal subunit protein uS7 from Mycoplasma mobile (strain ATCC 43663 / 163K / NCTC 11711) (Mesomycoplasma mobile).